The primary structure comprises 119 residues: Nascent polypeptide-associated complex protein (119 aa).

An NAC-A/B domain is found at 5–73 (RMNSREMRRL…FRETPKKQEG (69 aa)).

This sequence belongs to the NAC-alpha family. Homodimer. Interacts with the ribosome. Binds ribosomal RNA.

Contacts the emerging nascent chain on the ribosome. In Thermoplasma volcanium (strain ATCC 51530 / DSM 4299 / JCM 9571 / NBRC 15438 / GSS1), this protein is Nascent polypeptide-associated complex protein.